Here is a 186-residue protein sequence, read N- to C-terminus: ATP synthase subunit delta (186 aa).

It belongs to the ATPase delta chain family. F-type ATPases have 2 components, F(1) - the catalytic core - and F(0) - the membrane proton channel. F(1) has five subunits: alpha(3), beta(3), gamma(1), delta(1), epsilon(1). F(0) has three main subunits: a(1), b(2) and c(10-14). The alpha and beta chains form an alternating ring which encloses part of the gamma chain. F(1) is attached to F(0) by a central stalk formed by the gamma and epsilon chains, while a peripheral stalk is formed by the delta and b chains.

The protein resides in the cell membrane. Functionally, f(1)F(0) ATP synthase produces ATP from ADP in the presence of a proton or sodium gradient. F-type ATPases consist of two structural domains, F(1) containing the extramembraneous catalytic core and F(0) containing the membrane proton channel, linked together by a central stalk and a peripheral stalk. During catalysis, ATP synthesis in the catalytic domain of F(1) is coupled via a rotary mechanism of the central stalk subunits to proton translocation. This protein is part of the stalk that links CF(0) to CF(1). It either transmits conformational changes from CF(0) to CF(1) or is implicated in proton conduction. The sequence is that of ATP synthase subunit delta from Symbiobacterium thermophilum (strain DSM 24528 / JCM 14929 / IAM 14863 / T).